A 359-amino-acid chain; its full sequence is 4-hydroxy-3-methylbut-2-en-1-yl diphosphate synthase (flavodoxin) (359 aa).

[4Fe-4S] cluster is bound by residues Cys-264, Cys-267, Cys-299, and Glu-306.

It belongs to the IspG family. [4Fe-4S] cluster serves as cofactor.

It catalyses the reaction (2E)-4-hydroxy-3-methylbut-2-enyl diphosphate + oxidized [flavodoxin] + H2O + 2 H(+) = 2-C-methyl-D-erythritol 2,4-cyclic diphosphate + reduced [flavodoxin]. It participates in isoprenoid biosynthesis; isopentenyl diphosphate biosynthesis via DXP pathway; isopentenyl diphosphate from 1-deoxy-D-xylulose 5-phosphate: step 5/6. Converts 2C-methyl-D-erythritol 2,4-cyclodiphosphate (ME-2,4cPP) into 1-hydroxy-2-methyl-2-(E)-butenyl 4-diphosphate. This is 4-hydroxy-3-methylbut-2-en-1-yl diphosphate synthase (flavodoxin) from Helicobacter pylori (strain G27).